The following is a 304-amino-acid chain: Protein phosphatase PTC7 homolog (304 aa).

Residues 1-68 (MFSVLSYGRL…GDDACFVARH (68 aa)) constitute a mitochondrion transit peptide. The region spanning 69–299 (RSADVLGVAD…DDITVLLSIV (231 aa)) is the PPM-type phosphatase domain. The Mn(2+) site is built by Asp-78, Gly-79, and Asp-223.

It belongs to the PP2C family. In terms of assembly, interacts with FBXL4, BNIP3 and NIX; these interactions are important for ubiquitination and degradation of BNIP3 and NIX. Mg(2+) is required as a cofactor. It depends on Mn(2+) as a cofactor. As to expression, expressed in keratinocytes (at protein level).

The protein localises to the mitochondrion matrix. The enzyme catalyses O-phospho-L-seryl-[protein] + H2O = L-seryl-[protein] + phosphate. The catalysed reaction is O-phospho-L-threonyl-[protein] + H2O = L-threonyl-[protein] + phosphate. Its activity is regulated as follows. Inhibited by sodium orthovanadate. Its function is as follows. Protein phosphatase that plays an essential role in mitochondrial metabolism and biogenesis. Positively regulates biosynthesis of the ubiquinone, coenzyme Q. Dephosphorylates the ubiquinone biosynthesis protein COQ7 which is likely to lead to its activation. Serves as a crucial sensor for mitophagy, though the underlying mechanism remains ambiguous. May dephosphorylate BNIP3 and NIX and thereby directly regulates mitophagy receptor function and stability. Alternatively, promotes SCF-FBXL4-dependent ubiquitination and degradation of BNIP3 and NIX independently of its catalytic activity to restrain mitophagy. This is Protein phosphatase PTC7 homolog (PPTC7) from Homo sapiens (Human).